A 970-amino-acid polypeptide reads, in one-letter code: Rho GTPase-activating protein gacK (970 aa).

The N-terminal stretch at 1–20 (MTLVYEKSSFVLIMAQIAEA) is a signal peptide. 5 disordered regions span residues 30–49 (SNDL…SAAI), 258–285 (STCS…INQN), 312–446 (EITI…FSPT), 487–550 (STSN…NNNN), and 860–886 (TASS…NDDP). Composition is skewed to low complexity over residues 35–49 (STSA…SAAI) and 258–269 (STCSLSSNASNN). Positions 321–333 (IPLPPQSSSPPPT) are enriched in pro residues. A compositionally biased stretch (low complexity) spans 334 to 383 (RNNQSSPSPSSPQQQNIMPTPPSTSLTPPQSPTLSPSSSTHSTPTQTTTT). The segment covering 392–406 (PSTISQNNARKTQIP) has biased composition (polar residues). The segment covering 407–426 (TTTTTTTTTTTTTSTTSTTS) has biased composition (low complexity). Over residues 427 to 446 (PNPVVNNKNLNTPSSSFSPT) the composition is skewed to polar residues. The Rho-GAP domain maps to 754–970 (IEDSELVEDN…LELIQFNKSL (217 aa)). Residues 860–885 (TASSAATANSSSSGSGNGNSSPNNDD) are compositionally biased toward low complexity.

Its subcellular location is the cytoplasm. Rho GTPase-activating protein involved in the signal transduction pathway. In Dictyostelium discoideum (Social amoeba), this protein is Rho GTPase-activating protein gacK (gacK).